The primary structure comprises 315 residues: Homocysteine S-methyltransferase YbgG (315 aa).

In terms of domain architecture, Hcy-binding spans 2 to 309; that stretch reads NPIQHILDTY…ENIQEIAAWA (308 aa). Zn(2+)-binding residues include cysteine 229, cysteine 294, and cysteine 295.

Requires Zn(2+) as cofactor.

The enzyme catalyses S-methyl-L-methionine + L-homocysteine = 2 L-methionine + H(+). The protein is Homocysteine S-methyltransferase YbgG (ybgG) of Bacillus subtilis (strain 168).